We begin with the raw amino-acid sequence, 159 residues long: Gigasin-1 (159 aa).

2 disordered regions span residues 1 to 33 (GKAT…HDQT) and 80 to 159 (KESY…KYRR).

Component of the organic matrix of calcified shell layers.

In Magallana gigas (Pacific oyster), this protein is Gigasin-1.